A 158-amino-acid chain; its full sequence is Regulator of sigma D (158 aa).

It belongs to the Rsd/AlgQ family. As to quaternary structure, interacts with RpoD.

It is found in the cytoplasm. Functionally, binds RpoD and negatively regulates RpoD-mediated transcription activation by preventing the interaction between the primary sigma factor RpoD with the catalytic core of the RNA polymerase and with promoter DNA. May be involved in replacement of the RNA polymerase sigma subunit from RpoD to RpoS during the transition from exponential growth to the stationary phase. This Shigella boydii serotype 4 (strain Sb227) protein is Regulator of sigma D.